Consider the following 379-residue polypeptide: MSEEENAKEAIVVDNGSGVVKAGFAGENQPCSVFPSVVAKPKTKQVIVGGAGNKDCFVGDERQQKRGVCTLSYPIKSGMIKDWDGMQKIWDYTFYNELRIETENHPVLLTEAPLNPKQNRENMCRIMFEEYDFPSMYIQIQAVLSLYSAGRTTGIVVDSGDGVTHVVPIFEGYQIPHAIEKILLAGRDLTDYMCRILKDDDYHFETTAEKETVRDIKEKLCYVADDYEAELKKAGEGGELEESYALPDGRPLKISTQRFQCPEFLFQPDLGGRECKSVHQLTYDSIMTCDLDVRKDLYANIILSGGTTMFPGLGERLYKEMKDLAPQTMKVKVIASPDRKYAVWRGGSTLAKLSTFAGMWVTKEDYAEFGESIVHRKCI.

It belongs to the actin family.

It is found in the cytoplasm. Its subcellular location is the cytoskeleton. The enzyme catalyses ATP + H2O = ADP + phosphate + H(+). In terms of biological role, actins are highly conserved proteins that are involved in various types of cell motility and are ubiquitously expressed in all eukaryotic cells. The protein is Actin, cytoplasmic of Euplotes crassus.